Reading from the N-terminus, the 70-residue chain is uncharacterized protein (70 aa).

The protein resides in the plastid. It is found in the chloroplast. This is an uncharacterized protein from Mesostigma viride (Green alga).